We begin with the raw amino-acid sequence, 257 residues long: Snake venom serine protease KN2 (257 aa).

A signal peptide spans 1-18 (MVLIRVLANLLILQLSYA). A propeptide spanning residues 19-24 (QKSSEL) is cleaved from the precursor. Residues 25 to 248 (VIGGHPCNIN…HLDWIKSIIA (224 aa)) enclose the Peptidase S1 domain. 6 disulfides stabilise this stretch: C31–C162, C49–C65, C97–C255, C141–C209, C173–C188, and C199–C224. Residues H64 and D109 each act as charge relay system in the active site. 2 N-linked (GlcNAc...) asparagine glycosylation sites follow: N120 and N121. S203 acts as the Charge relay system in catalysis.

The protein belongs to the peptidase S1 family. Snake venom subfamily. As to quaternary structure, monomer. Expressed by the venom gland.

The protein localises to the secreted. Snake venom serine protease that may act in the hemostasis system of the prey. In Trimeresurus stejnegeri (Chinese green tree viper), this protein is Snake venom serine protease KN2.